The sequence spans 387 residues: 3-ketoacyl-CoA thiolase (387 aa).

The active-site Acyl-thioester intermediate is cysteine 91. Catalysis depends on proton acceptor residues histidine 343 and cysteine 373.

Belongs to the thiolase-like superfamily. Thiolase family. In terms of assembly, heterotetramer of two alpha chains (FadB) and two beta chains (FadA).

Its subcellular location is the cytoplasm. It catalyses the reaction an acyl-CoA + acetyl-CoA = a 3-oxoacyl-CoA + CoA. It functions in the pathway lipid metabolism; fatty acid beta-oxidation. Its function is as follows. Catalyzes the final step of fatty acid oxidation in which acetyl-CoA is released and the CoA ester of a fatty acid two carbons shorter is formed. This is 3-ketoacyl-CoA thiolase from Shewanella loihica (strain ATCC BAA-1088 / PV-4).